The sequence spans 287 residues: Aspartate dehydrogenase domain-containing protein (287 aa).

Phosphoserine is present on residues serine 24 and serine 172.

Belongs to the L-aspartate dehydrogenase family.

The chain is Aspartate dehydrogenase domain-containing protein from Mus musculus (Mouse).